The following is a 76-amino-acid chain: uncharacterized protein (76 aa).

It localises to the plastid. This is an uncharacterized protein from Euglena longa (Euglenophycean alga).